Consider the following 234-residue polypeptide: Uridylate kinase (234 aa).

ATP is bound at residue 10 to 11; it reads GS. G44 is a binding site for UMP. ATP is bound by residues G45 and R49. UMP contacts are provided by residues D66 and 114-120; that span reads ITPGQTT. ATP is bound by residues T140, Y146, and D149.

The protein belongs to the UMP kinase family. Homohexamer.

Its subcellular location is the cytoplasm. It carries out the reaction UMP + ATP = UDP + ADP. It functions in the pathway pyrimidine metabolism; CTP biosynthesis via de novo pathway; UDP from UMP (UMPK route): step 1/1. With respect to regulation, inhibited by UTP. In terms of biological role, catalyzes the reversible phosphorylation of UMP to UDP. The polypeptide is Uridylate kinase (Methanoregula boonei (strain DSM 21154 / JCM 14090 / 6A8)).